A 479-amino-acid polypeptide reads, in one-letter code: Ribulose bisphosphate carboxylase large chain (479 aa).

A propeptide spanning residues 1–2 is cleaved from the precursor; it reads MS. Pro-3 carries the post-translational modification N-acetylproline. Lys-14 bears the N6,N6,N6-trimethyllysine mark. Residues Asn-123 and Thr-173 each contribute to the substrate site. Lys-175 functions as the Proton acceptor in the catalytic mechanism. Position 177 (Lys-177) interacts with substrate. Residues Lys-201, Asp-203, and Glu-204 each contribute to the Mg(2+) site. Lys-201 carries the post-translational modification N6-carboxylysine. His-294 serves as the catalytic Proton acceptor. 3 residues coordinate substrate: Arg-295, His-327, and Ser-379.

Belongs to the RuBisCO large chain family. Type I subfamily. Heterohexadecamer of 8 large chains and 8 small chains; disulfide-linked. The disulfide link is formed within the large subunit homodimers. The cofactor is Mg(2+). The disulfide bond which can form in the large chain dimeric partners within the hexadecamer appears to be associated with oxidative stress and protein turnover.

The protein resides in the plastid. The protein localises to the chloroplast. It carries out the reaction 2 (2R)-3-phosphoglycerate + 2 H(+) = D-ribulose 1,5-bisphosphate + CO2 + H2O. The catalysed reaction is D-ribulose 1,5-bisphosphate + O2 = 2-phosphoglycolate + (2R)-3-phosphoglycerate + 2 H(+). In terms of biological role, ruBisCO catalyzes two reactions: the carboxylation of D-ribulose 1,5-bisphosphate, the primary event in carbon dioxide fixation, as well as the oxidative fragmentation of the pentose substrate in the photorespiration process. Both reactions occur simultaneously and in competition at the same active site. The polypeptide is Ribulose bisphosphate carboxylase large chain (Ananas comosus (Pineapple)).